A 352-amino-acid polypeptide reads, in one-letter code: MIRKAIARVVERQDLSEAEMIEVMDQVMSGGATPAQIASFITALRMKGETVDEITGAARVMRDRALPIRVGKSVLGIDRDDINLDRETILDTCGTGGSGTNSFNISTTVAFIVSACGVKVAKHGNRAVSSSCGSADVLEALGVNLDVTPEVVERSIAQIGIGFLFAPALHGAMKHAIGPRREIGIRTIFNILGPLTNPAGADCQVLGVYREDLVEKLAQVLKKLGCRSGFVVHGSDGMDEITLTGESTVAEITADGVKLSKVTPEQFGLERAPLTELHGGDAQGNAVIVRDILSGKDGAKRRIVLLNAGYALVATGKAKDVAEGIRLAAETIDSGAAMKQLERLVALTNEAE.

Residues G94, 97–98 (GS), S102, 104–107 (NIST), 122–130 (KHGNRAVSS), and S134 contribute to the 5-phospho-alpha-D-ribose 1-diphosphate site. G94 lines the anthranilate pocket. S106 is a Mg(2+) binding site. N125 provides a ligand contact to anthranilate. Residue R180 coordinates anthranilate. Mg(2+) contacts are provided by D239 and E240.

The protein belongs to the anthranilate phosphoribosyltransferase family. Homodimer. The cofactor is Mg(2+).

It catalyses the reaction N-(5-phospho-beta-D-ribosyl)anthranilate + diphosphate = 5-phospho-alpha-D-ribose 1-diphosphate + anthranilate. It participates in amino-acid biosynthesis; L-tryptophan biosynthesis; L-tryptophan from chorismate: step 2/5. Its function is as follows. Catalyzes the transfer of the phosphoribosyl group of 5-phosphorylribose-1-pyrophosphate (PRPP) to anthranilate to yield N-(5'-phosphoribosyl)-anthranilate (PRA). In Geobacter sp. (strain M21), this protein is Anthranilate phosphoribosyltransferase.